Consider the following 408-residue polypeptide: Histidine--tRNA ligase (408 aa).

The protein belongs to the class-II aminoacyl-tRNA synthetase family. Homodimer.

It localises to the cytoplasm. The catalysed reaction is tRNA(His) + L-histidine + ATP = L-histidyl-tRNA(His) + AMP + diphosphate + H(+). The sequence is that of Histidine--tRNA ligase from Campylobacter jejuni subsp. doylei (strain ATCC BAA-1458 / RM4099 / 269.97).